A 161-amino-acid polypeptide reads, in one-letter code: Nucleotide-binding protein Bamb_2603 (161 aa).

Belongs to the YajQ family.

Its function is as follows. Nucleotide-binding protein. This chain is Nucleotide-binding protein Bamb_2603, found in Burkholderia ambifaria (strain ATCC BAA-244 / DSM 16087 / CCUG 44356 / LMG 19182 / AMMD) (Burkholderia cepacia (strain AMMD)).